Consider the following 283-residue polypeptide: Pantothenate synthetase (283 aa).

An ATP-binding site is contributed by 30–37 (MGNLHLGH). Residue histidine 37 is the Proton donor of the active site. Residue glutamine 61 participates in (R)-pantoate binding. Glutamine 61 is a beta-alanine binding site. ATP is bound at residue 149 to 152 (GQKD). Glutamine 155 contributes to the (R)-pantoate binding site. ATP is bound by residues isoleucine 178 and 186-189 (MSSR).

It belongs to the pantothenate synthetase family. As to quaternary structure, homodimer.

Its subcellular location is the cytoplasm. It carries out the reaction (R)-pantoate + beta-alanine + ATP = (R)-pantothenate + AMP + diphosphate + H(+). It functions in the pathway cofactor biosynthesis; (R)-pantothenate biosynthesis; (R)-pantothenate from (R)-pantoate and beta-alanine: step 1/1. Its function is as follows. Catalyzes the condensation of pantoate with beta-alanine in an ATP-dependent reaction via a pantoyl-adenylate intermediate. In Shewanella halifaxensis (strain HAW-EB4), this protein is Pantothenate synthetase.